We begin with the raw amino-acid sequence, 131 residues long: MARQPTKKSGSKKQKRNVPNGMAYIQSTFNNSIVTITDQNGDVISWASAGSSGFKGAKKGTPFAAQTAAESAARRAIDQGMRQIEVMVSGPGAGRETAIRALQGAGLEITLIRDITPIPHNGCRPPKRRRV.

The protein belongs to the universal ribosomal protein uS11 family. Part of the 30S ribosomal subunit. Interacts with proteins S7 and S18. Binds to IF-3.

Its function is as follows. Located on the platform of the 30S subunit, it bridges several disparate RNA helices of the 16S rRNA. Forms part of the Shine-Dalgarno cleft in the 70S ribosome. The sequence is that of Small ribosomal subunit protein uS11 from Trichormus variabilis (strain ATCC 29413 / PCC 7937) (Anabaena variabilis).